A 70-amino-acid chain; its full sequence is Palustrin-2ISa (70 aa).

Residues 1–22 (MFTLKKSLLLLFFLGTISLSLC) form the signal peptide. The propeptide at 23–39 (EQERSAEDEGEVIEEEV) is removed in mature form. Cys64 and Cys70 are disulfide-bonded.

Expressed by the skin glands.

It localises to the secreted. Has antimicrobial activity against Gram-negative bacterium E.coli ATCC 8739 (MIC=100 ug), against Gram positive bacteria S.aureus ATCC 6538 (MIC=25 ug), methicillin-resistant S.aureus ATCC 43300 (MIC=100 ug), B.subtilis ATCC 6633 (MIC=12.5 ug) and against fungus C.albicans ATCC 90028 (MIC=100 ug). In Odorrana ishikawae (Ishikawa's frog), this protein is Palustrin-2ISa.